The following is a 1430-amino-acid chain: FYVE, RhoGEF and PH domain-containing protein 6 (1430 aa).

The segment at M1–I36 is disordered. Over residues K15 to K24 the composition is skewed to low complexity. Residue S231 is modified to Phosphoserine. The tract at residues C330–L351 is disordered. Polar residues predominate over residues P334–L351. The residue at position 515 (S515) is a Phosphoserine. The tract at residues E516–R538 is disordered. Positions S527–R538 are enriched in basic and acidic residues. 4 positions are modified to phosphoserine: S554, S605, S692, and S721. Disordered stretches follow at residues N695–S739 and P800–K869. The span at S728–S739 shows a compositional bias: polar residues. Positions P831–S847 are enriched in acidic residues. The span at S851–M868 shows a compositional bias: basic and acidic residues. Positions K871–T1060 constitute a DH domain. The PH 1 domain maps to V1089–E1183. S1197 carries the phosphoserine modification. The segment at D1222 to Q1281 adopts an FYVE-type zinc-finger fold. Residues C1228, C1231, C1244, C1247, C1252, C1255, C1273, and C1276 each contribute to the Zn(2+) site. In terms of domain architecture, PH 2 spans D1333–I1429.

The protein resides in the cytoplasm. It localises to the cytoskeleton. Functionally, may activate CDC42, a member of the Ras-like family of Rho- and Rac proteins, by exchanging bound GDP for free GTP. May play a role in regulating the actin cytoskeleton and cell shape. This Homo sapiens (Human) protein is FYVE, RhoGEF and PH domain-containing protein 6 (FGD6).